The chain runs to 592 residues: MSLSQILTPSIQKAIQVLFDVSVDKIEFQTTRKEFEGDITMVIFPLLKVIKSNPAELGNKIGTYLVENVSEVARFNVVSGFLNIVISDSYYVDFFNGIKDQKQFGFLSPNPEEKAVMVEYSSPNTNKPLHLGHVRNNLLGYSVAEILKASGKKVYKTQIINDRGIHICKSMLAWEKFGNGETPESSDLKGDKLVGKYYVEFDKAYKTEINQLIETGKTEEEAKKQAPIIIEAQEMLKKWEAGDEQVIALWKKMNQWVYDGFATTYTNLGVNFDKYYYESNTYLLGKDVVQVGLDKGVFEKDPDGSVWIDLTDEGLDRKIVLRSDGTAVYMTQDIGTAIQRVKDMPDVGGMVYTVGNEQDYHFKVLFLILKKLGFDWASSLYHLSYGMVDLPSGKMKSREGTVVDADDLMQDMTDTAKQIAEDLGKLDSYSADEKAKLYKTIGLGALKYYILKVDPKKRILFNPEESVDFAGNTGPFIQYTYARIQSIIRKADFDFSNKIEIEELHEKEKELVKQIELFPEVIQNAAQNHSPALIANYTYDLVKEYNSFYQSVHILGEADLTKKIFRVQLSQKVAEVIKSAFSLLGIEVPERM.

A 'HIGH' region motif is present at residues 123-133 (PNTNKPLHLGH).

The protein belongs to the class-I aminoacyl-tRNA synthetase family. As to quaternary structure, monomer.

It is found in the cytoplasm. It catalyses the reaction tRNA(Arg) + L-arginine + ATP = L-arginyl-tRNA(Arg) + AMP + diphosphate. The chain is Arginine--tRNA ligase from Flavobacterium johnsoniae (strain ATCC 17061 / DSM 2064 / JCM 8514 / BCRC 14874 / CCUG 350202 / NBRC 14942 / NCIMB 11054 / UW101) (Cytophaga johnsonae).